We begin with the raw amino-acid sequence, 860 residues long: Leucine--tRNA ligase (860 aa).

The 'HIGH' region motif lies at Pro-42–His-52. The 'KMSKS' region motif lies at Lys-619–Ser-623. Lys-622 contributes to the ATP binding site.

This sequence belongs to the class-I aminoacyl-tRNA synthetase family.

It is found in the cytoplasm. It catalyses the reaction tRNA(Leu) + L-leucine + ATP = L-leucyl-tRNA(Leu) + AMP + diphosphate. The protein is Leucine--tRNA ligase of Salmonella paratyphi A (strain ATCC 9150 / SARB42).